The following is a 259-amino-acid chain: Dolichol-phosphate mannosyltransferase subunit 1 (259 aa).

Ala2 carries the N-acetylalanine modification. At Ser3 the chain carries Phosphoserine. Positions 31, 33, 35, 62, 64, 117, 118, 119, 146, 233, and 239 each coordinate GDP-alpha-D-mannose. Asp119 lines the Mg(2+) pocket. Mn(2+) is bound at residue Asp119.

It belongs to the glycosyltransferase 2 family. As to quaternary structure, component of the dolichol-phosphate mannose (DPM) synthase complex composed of DPM1, DPM2 and DPM3; within the complex, directly interacts with DPM3. This interaction may stabilize DPM1. Mg(2+) serves as cofactor. Requires Mn(2+) as cofactor. It depends on Ca(2+) as a cofactor.

It localises to the endoplasmic reticulum. The enzyme catalyses a di-trans,poly-cis-dolichyl phosphate + GDP-alpha-D-mannose = a di-trans,poly-cis-dolichyl beta-D-mannosyl phosphate + GDP. The protein operates within protein modification; protein glycosylation. Transfers mannose from GDP-mannose to dolichol monophosphate to form dolichol phosphate mannose (Dol-P-Man) which is the mannosyl donor in pathways leading to N-glycosylation, glycosyl phosphatidylinositol membrane anchoring, and O-mannosylation of proteins; catalytic subunit of the dolichol-phosphate mannose (DPM) synthase complex. This is Dolichol-phosphate mannosyltransferase subunit 1 (DPM1) from Sus scrofa (Pig).